We begin with the raw amino-acid sequence, 134 residues long: Retinol-binding protein 2 (134 aa).

2 residues coordinate all-trans-retinol: K41 and Q109.

This sequence belongs to the calycin superfamily. Fatty-acid binding protein (FABP) family.

Its subcellular location is the cytoplasm. Intracellular transport of retinol. This chain is Retinol-binding protein 2 (RBP2), found in Sus scrofa (Pig).